Here is a 786-residue protein sequence, read N- to C-terminus: Endonuclease MutS2 (786 aa).

Residue 332–339 (GPNTGGKT) coordinates ATP. The Smr domain maps to 711-786 (IDLRGMDSME…GTGVTVVELK (76 aa)).

The protein belongs to the DNA mismatch repair MutS family. MutS2 subfamily. Homodimer. Binds to stalled ribosomes, contacting rRNA.

Functionally, endonuclease that is involved in the suppression of homologous recombination and thus may have a key role in the control of bacterial genetic diversity. Its function is as follows. Acts as a ribosome collision sensor, splitting the ribosome into its 2 subunits. Detects stalled/collided 70S ribosomes which it binds and splits by an ATP-hydrolysis driven conformational change. Acts upstream of the ribosome quality control system (RQC), a ribosome-associated complex that mediates the extraction of incompletely synthesized nascent chains from stalled ribosomes and their subsequent degradation. Probably generates substrates for RQC. This Clostridium tetani (strain Massachusetts / E88) protein is Endonuclease MutS2.